Here is a 395-residue protein sequence, read N- to C-terminus: Acetylornithine aminotransferase (395 aa).

Residues 117–118 (GA) and Phe144 contribute to the pyridoxal 5'-phosphate site. Arg147 serves as a coordination point for N(2)-acetyl-L-ornithine. Pyridoxal 5'-phosphate is bound at residue 230–233 (DEVQ). Lys259 is subject to N6-(pyridoxal phosphate)lysine. Ser285 provides a ligand contact to N(2)-acetyl-L-ornithine. Thr286 lines the pyridoxal 5'-phosphate pocket.

The protein belongs to the class-III pyridoxal-phosphate-dependent aminotransferase family. ArgD subfamily. As to quaternary structure, homodimer. It depends on pyridoxal 5'-phosphate as a cofactor.

It localises to the cytoplasm. The catalysed reaction is N(2)-acetyl-L-ornithine + 2-oxoglutarate = N-acetyl-L-glutamate 5-semialdehyde + L-glutamate. Its pathway is amino-acid biosynthesis; L-arginine biosynthesis; N(2)-acetyl-L-ornithine from L-glutamate: step 4/4. In Methanosarcina mazei (strain ATCC BAA-159 / DSM 3647 / Goe1 / Go1 / JCM 11833 / OCM 88) (Methanosarcina frisia), this protein is Acetylornithine aminotransferase.